Reading from the N-terminus, the 157-residue chain is Large ribosomal subunit protein uL10 (157 aa).

The protein belongs to the universal ribosomal protein uL10 family. In terms of assembly, part of the ribosomal stalk of the 50S ribosomal subunit. The N-terminus interacts with L11 and the large rRNA to form the base of the stalk. The C-terminus forms an elongated spine to which L12 dimers bind in a sequential fashion forming a multimeric L10(L12)X complex.

In terms of biological role, forms part of the ribosomal stalk, playing a central role in the interaction of the ribosome with GTP-bound translation factors. This chain is Large ribosomal subunit protein uL10, found in Campylobacter hominis (strain ATCC BAA-381 / DSM 21671 / CCUG 45161 / LMG 19568 / NCTC 13146 / CH001A).